The sequence spans 227 residues: UPF0758 protein Dhaf_4352 (227 aa).

The 123-residue stretch at 105 to 227 (VINSPQDIAH…YISLKERGIL (123 aa)) folds into the MPN domain. Zn(2+) contacts are provided by His-176, His-178, and Asp-189. Residues 176-189 (HNHPSGDPTPSSED) carry the JAMM motif motif.

Belongs to the UPF0758 family.

In Desulfitobacterium hafniense (strain DSM 10664 / DCB-2), this protein is UPF0758 protein Dhaf_4352.